Consider the following 242-residue polypeptide: Methylthioribulose-1-phosphate dehydratase (242 aa).

Ser-87 carries the phosphoserine modification. Cys-97 is a binding site for substrate. Zn(2+)-binding residues include His-115 and His-117. The active-site Proton donor/acceptor is the Glu-139. His-195 serves as a coordination point for Zn(2+).

The protein belongs to the aldolase class II family. MtnB subfamily. In terms of assembly, homotetramer. Interacts with APAF1. May interact with CASP1. Zn(2+) serves as cofactor. Isoform 1 is ubiquitously expressed. Isoform 2 is expressed at lower levels and detected in heart, brain, pancreas, liver, placenta, skeletal muscle and kidney.

The protein localises to the cytoplasm. The enzyme catalyses 5-(methylsulfanyl)-D-ribulose 1-phosphate = 5-methylsulfanyl-2,3-dioxopentyl phosphate + H2O. It functions in the pathway amino-acid biosynthesis; L-methionine biosynthesis via salvage pathway; L-methionine from S-methyl-5-thio-alpha-D-ribose 1-phosphate: step 2/6. In terms of biological role, catalyzes the dehydration of methylthioribulose-1-phosphate (MTRu-1-P) into 2,3-diketo-5-methylthiopentyl-1-phosphate (DK-MTP-1-P). Functions in the methionine salvage pathway, which plays a key role in cancer, apoptosis, microbial proliferation and inflammation. May inhibit the CASP1-related inflammatory response (pyroptosis), the CASP9-dependent apoptotic pathway and the cytochrome c-dependent and APAF1-mediated cell death. This Homo sapiens (Human) protein is Methylthioribulose-1-phosphate dehydratase.